A 254-amino-acid polypeptide reads, in one-letter code: Cell division protein FtsQ (254 aa).

Residues 1-27 (MNILKRKTPQNIRFGEQKPKYYFHIRA) are Cytoplasmic-facing. Residues 28-48 (FAVLLGVFFLLGVYFNWQSIL) traverse the membrane as a helical segment. Residues 49–254 (EKMDDKPISA…AGAAVGMVDR (206 aa)) are Periplasmic-facing. Residues 54-124 (KPISAFALVG…NRLSIWVSEY (71 aa)) enclose the POTRA domain.

It belongs to the FtsQ/DivIB family. FtsQ subfamily. As to quaternary structure, part of a complex composed of FtsB, FtsL and FtsQ.

Its subcellular location is the cell inner membrane. Its function is as follows. Essential cell division protein. May link together the upstream cell division proteins, which are predominantly cytoplasmic, with the downstream cell division proteins, which are predominantly periplasmic. May control correct divisome assembly. In Haemophilus influenzae (strain ATCC 51907 / DSM 11121 / KW20 / Rd), this protein is Cell division protein FtsQ.